The primary structure comprises 179 residues: ADP-ribosylation factor-like protein 5B (179 aa).

Gly-2 is lipidated: N-myristoyl glycine. GTP-binding positions include 23–30, 66–70, 125–128, and Ala-159; these read GLDNAGKT, DIGGQ, and NKQD.

The protein belongs to the small GTPase superfamily. Arf family.

Its function is as follows. Binds and exchanges GTP and GDP. This chain is ADP-ribosylation factor-like protein 5B (Arl5b), found in Mus musculus (Mouse).